Here is a 955-residue protein sequence, read N- to C-terminus: GPI inositol-deacylase B (955 aa).

Asparagine 7 carries an N-linked (GlcNAc...) asparagine glycan. A helical transmembrane segment spans residues 8–28; it reads ASVALWTVFTILTIWISFALH. Residue serine 180 is part of the active site. Asparagine 431 carries an N-linked (GlcNAc...) asparagine glycan. 4 helical membrane-spanning segments follow: residues 489–509, 600–620, 643–663, and 703–723; these read IAFPALTSGLISYKVLTSGGV, LLFSLPTAVLYAVLLLQFWRY, YLSWACLVVAGLSFVIKFEFI, and PIGVVLAPAFLALATGIVVVV. An N-linked (GlcNAc...) asparagine glycan is attached at asparagine 753. Transmembrane regions (helical) follow at residues 772-792, 840-860, and 870-890; these read VIIALMALLVLLFVPYQLAFA, TMSVVMVWTTLVNIPVLAVWV, and IFSSHHNLLSVLPTLLFIENL. Asparagine 914 carries N-linked (GlcNAc...) asparagine glycosylation. Residues 919–939 traverse the membrane as a helical segment; that stretch reads GMMHAFMIHHWFNLLAGWLLI. N-linked (GlcNAc...) asparagine glycosylation is present at asparagine 945.

Belongs to the GPI inositol-deacylase family.

It localises to the endoplasmic reticulum membrane. Its function is as follows. Involved in inositol deacylation of GPI-anchored proteins which plays important roles in the quality control and ER-associated degradation of GPI-anchored proteins. The sequence is that of GPI inositol-deacylase B (BST1B) from Yarrowia lipolytica (strain CLIB 122 / E 150) (Yeast).